Here is a 335-residue protein sequence, read N- to C-terminus: Selenide, water dikinase (335 aa).

Sec7 is a catalytic residue. A non-standard amino acid (selenocysteine) is located at residue Sec7. Residues Lys10 and 36-38 contribute to the ATP site; that span reads LGD. Mg(2+) is bound at residue Asp39. ATP-binding positions include Asp55, Asp78, and 126–128; that span reads GHT. Asp78 provides a ligand contact to Mg(2+). Asp232 provides a ligand contact to Mg(2+).

It belongs to the selenophosphate synthase 1 family. Class I subfamily. As to quaternary structure, homodimer. Mg(2+) serves as cofactor.

It carries out the reaction hydrogenselenide + ATP + H2O = selenophosphate + AMP + phosphate + 2 H(+). Functionally, synthesizes selenophosphate from selenide and ATP. This Methanococcus maripaludis (strain DSM 14266 / JCM 13030 / NBRC 101832 / S2 / LL) protein is Selenide, water dikinase.